We begin with the raw amino-acid sequence, 229 residues long: Cytochrome c oxidase subunit 2 (229 aa).

Over 1–26 the chain is Mitochondrial intermembrane; the sequence is MATWSNLGLQDSASPLMEQLNFFHDH. The chain crosses the membrane as a helical span at residues 27–48; it reads TLLILIMITILVGYLMLMLFFN. At 49–62 the chain is on the mitochondrial matrix side; it reads KFTNRFLLHGQTIE. The helical transmembrane segment at 63 to 82 threads the bilayer; it reads IIWTILPAIVLMFIALPSLR. Over 83–229 the chain is Mitochondrial intermembrane; sequence ILYLLDEINS…IKWITAMNSN (147 aa). The Cu cation site is built by H161, C196, E198, C200, H204, and M207. E198 contacts Mg(2+).

It belongs to the cytochrome c oxidase subunit 2 family. Component of the cytochrome c oxidase (complex IV, CIV), a multisubunit enzyme composed of a catalytic core of 3 subunits and several supernumerary subunits. The complex exists as a monomer or a dimer and forms supercomplexes (SCs) in the inner mitochondrial membrane with ubiquinol-cytochrome c oxidoreductase (cytochrome b-c1 complex, complex III, CIII). Cu cation is required as a cofactor.

The protein localises to the mitochondrion inner membrane. It catalyses the reaction 4 Fe(II)-[cytochrome c] + O2 + 8 H(+)(in) = 4 Fe(III)-[cytochrome c] + 2 H2O + 4 H(+)(out). In terms of biological role, component of the cytochrome c oxidase, the last enzyme in the mitochondrial electron transport chain which drives oxidative phosphorylation. The respiratory chain contains 3 multisubunit complexes succinate dehydrogenase (complex II, CII), ubiquinol-cytochrome c oxidoreductase (cytochrome b-c1 complex, complex III, CIII) and cytochrome c oxidase (complex IV, CIV), that cooperate to transfer electrons derived from NADH and succinate to molecular oxygen, creating an electrochemical gradient over the inner membrane that drives transmembrane transport and the ATP synthase. Cytochrome c oxidase is the component of the respiratory chain that catalyzes the reduction of oxygen to water. Electrons originating from reduced cytochrome c in the intermembrane space (IMS) are transferred via the dinuclear copper A center (CU(A)) of subunit 2 and heme A of subunit 1 to the active site in subunit 1, a binuclear center (BNC) formed by heme A3 and copper B (CU(B)). The BNC reduces molecular oxygen to 2 water molecules using 4 electrons from cytochrome c in the IMS and 4 protons from the mitochondrial matrix. The chain is Cytochrome c oxidase subunit 2 (COII) from Simulium vittatum (Striped black fly).